We begin with the raw amino-acid sequence, 199 residues long: MARCKS-related protein (199 aa).

The tract at residues 1-199 (MGSQSSKAPR…GPASASAENE (199 aa)) is disordered. Residue Gly2 is the site of N-myristoyl glycine attachment. Phosphothreonine is present on Thr14. Positions 16–26 (EEAAGASPAKA) are enriched in low complexity. A phosphoserine mark is found at Ser22, Ser36, and Ser48. A compositionally biased stretch (low complexity) spans 53–64 (GADEAAGATGDA). Ser71 carries the post-translational modification Phosphoserine. A compositionally biased stretch (basic and acidic residues) spans 74–85 (AEAKGEVAPKET). Thr85 is subject to Phosphothreonine. Positions 86–98 (PKKKKKFSFKKPF) are enriched in basic residues. The effector domain involved in lipid-binding and calmodulin-binding stretch occupies residues 87–110 (KKKKKFSFKKPFKLSGLSFKRNRK). Ser93, Ser101, and Ser104 each carry phosphoserine; by PKC. A Phosphoserine modification is found at Ser119. The residue at position 120 (Ser120) is a Phosphoserine; by MAPK8. Ser132 and Ser135 each carry phosphoserine. Thr148 carries the post-translational modification Phosphothreonine; by MAPK8. Phosphoserine occurs at positions 151, 162, and 165. Low complexity predominate over residues 175–199 (GPQAAEPSTPSGPESGPASASAENE). Thr183 carries the phosphothreonine; by MAPK8 modification.

The protein belongs to the MARCKS family. As to quaternary structure, binds to filamentous actin (F-actin), but not to monomeric G-actin, independently of its phosphorylation status. Interacts with calmodulin. Post-translationally, phosphorylated. Phosphorylation at Ser-120 and Thr-183 is non-redundantly catalyzed by MAPK8 in vivo. Phosphorylation at Thr-148 is preferentially catalyzed by MAPK8 in vivo, but this modification can also be catalyzed by other kinases in the absence of MAPK8. May be phosphorylated by protein kinase C, which disrupts the interaction with calmodulin.

It is found in the cytoplasm. Its subcellular location is the cytoskeleton. The protein resides in the cell membrane. In terms of biological role, controls cell movement by regulating actin cytoskeleton homeostasis and filopodium and lamellipodium formation. When unphosphorylated, induces cell migration. When phosphorylated by MAPK8, induces actin bundles formation and stabilization, thereby reducing actin plasticity, hence restricting cell movement, including neuronal migration. May be involved in coupling the protein kinase C and calmodulin signal transduction systems. This Rattus norvegicus (Rat) protein is MARCKS-related protein (Marcksl1).